A 443-amino-acid polypeptide reads, in one-letter code: Omega-6 fatty acid desaturase, chloroplastic (443 aa).

Residues 1 to 64 (MASRIADSLF…AKKRIGCIKA (64 aa)) constitute a chloroplast transit peptide. The Histidine box-1 signature appears at 166–170 (HDCAH). A Histidine box-2 motif is present at residues 202 to 206 (HDRHH). The short motif at 362–366 (HIPHH) is the Histidine box-3 element.

This sequence belongs to the fatty acid desaturase type 1 family.

The protein resides in the plastid. The protein localises to the chloroplast membrane. It carries out the reaction a (9Z)-octadecenoyl-containing glycerolipid + 2 reduced [2Fe-2S]-[ferredoxin] + O2 + 2 H(+) = a (9Z,12Z)-octadecadienoyl-containing glycerolipid + 2 oxidized [2Fe-2S]-[ferredoxin] + 2 H2O. It participates in lipid metabolism; polyunsaturated fatty acid biosynthesis. Functionally, chloroplast omega-6 fatty acid desaturase introduces the second double bond in the biosynthesis of 16:3 and 18:3 fatty acids, important constituents of plant membranes. It is thought to use ferredoxin as an electron donor and to act on fatty acids esterified to galactolipids, sulfolipids and phosphatidylglycerol. This chain is Omega-6 fatty acid desaturase, chloroplastic, found in Brassica napus (Rape).